Consider the following 241-residue polypeptide: DnaA regulatory inactivator Hda (241 aa).

Belongs to the DnaA family. HdA subfamily. The active form seems to be an ADP-bound monomer. Forms the RIDA complex (regulatory inactivation of DnaA) of ATP-DnaA, ADP-Hda and the DNA-loaded beta sliding clamp (dnaN).

Mediates the interaction of DNA replication initiator protein DnaA with DNA polymerase subunit beta sliding clamp (dnaN). Stimulates hydrolysis of ATP-DnaA to ADP-DnaA, rendering DnaA inactive for reinitiation, a process called regulatory inhibition of DnaA or RIDA. In Salmonella paratyphi A (strain ATCC 9150 / SARB42), this protein is DnaA regulatory inactivator Hda.